Consider the following 706-residue polypeptide: Cyclic nucleotide-gated channel alpha-3 (706 aa).

Over 1-189 the chain is Cytoplasmic; the sequence is MAKISTQYSH…MDPSSNMYYH (189 aa). The interval 113-177 is disordered; the sequence is RESHVQFNVG…PKKEEKKKDS (65 aa). Positions 147-177 are enriched in basic and acidic residues; it reads SEKDDKAKKEEKEKKEEKKENPKKEEKKKDS. Residues 190–211 traverse the membrane as a helical segment; the sequence is WLTVIAVPVFYNWCLLVCRACF. Topologically, residues 212-217 are extracellular; that stretch reads DELQSE. The helical transmembrane segment at 218–238 threads the bilayer; it reads HLMLWLVLDYSADILYGMDML. Over 239 to 265 the chain is Cytoplasmic; that stretch reads VRARTGFLEQGLMVMDASRLWKHYTQT. The chain crosses the membrane as a helical span at residues 266 to 285; that stretch reads LHFKLDVLSLVPTDLAYFKL. Topologically, residues 286-289 are extracellular; it reads GMNY. A helical membrane pass occupies residues 290 to 307; that stretch reads PELRFNRLLKLARLFEFF. Residues 308 to 317 lie on the Cytoplasmic side of the membrane; that stretch reads DRTETRTNYP. An ion conduction pathway region spans residues 317–425; it reads PNMFRIGNLV…GNVGSMISNM (109 aa). A helical membrane pass occupies residues 318-340; sequence NMFRIGNLVLYILIIIHWNACIY. Topologically, residues 341 to 366 are extracellular; that stretch reads FAISKFIGFGTDSWVYPNVSNPEYGR. An N-linked (GalNAc...) asparagine glycan is attached at Asn358. Helical transmembrane passes span 367 to 397 and 398 to 422; these read LSRK…DEEY and LFVV…GSMI. Residues 384-387 form a selectivity filter region; that stretch reads TIGE. The Cytoplasmic segment spans residues 423 to 706; sequence SNMNASRAEF…DAPQTEASQP (284 aa). Positions 427 to 504 are C-linker; sequence ASRAEFQAKI…TLRKVRIFQD (78 aa). The tract at residues 507–627 is cyclic nucleotide-binding domain; that stretch reads AGLLVELVLK…EEKGRQILMK (121 aa). 6 residues coordinate 3',5'-cyclic GMP: Gly567, Glu568, Ser570, Arg583, Thr584, and Asp628. A coiled-coil region spans residues 645–688; it reads IEEKVEHLETSLDSLQTRFARLLAEYNATQMKVKQRLSQLESQV. The segment at 685–706 is disordered; sequence ESQVKMGLPPDGDAPQTEASQP.

It belongs to the cyclic nucleotide-gated cation channel (TC 1.A.1.5) family. CNGA3 subfamily. In terms of assembly, forms heterotetrameric channels composed of CNGA3 and CNGB3 subunits with 3:1 stoichiometry. In terms of tissue distribution, testis, kidney, retinal cone (at protein level) and heart.

It is found in the cell membrane. The catalysed reaction is Ca(2+)(in) = Ca(2+)(out). The enzyme catalyses Na(+)(in) = Na(+)(out). It carries out the reaction K(+)(in) = K(+)(out). It catalyses the reaction NH4(+)(in) = NH4(+)(out). The catalysed reaction is Rb(+)(in) = Rb(+)(out). The enzyme catalyses Li(+)(in) = Li(+)(out). It carries out the reaction Cs(+)(in) = Cs(+)(out). Its activity is regulated as follows. Ca(2+) influx is inhibited by extracellular Mg(2+) ions. In terms of biological role, pore-forming subunit of the cone cyclic nucleotide-gated channel. Mediates cone photoresponses at bright light converting transient changes in intracellular cGMP levels into electrical signals. In the dark, cGMP levels are high and keep the channel open enabling a steady inward current carried by Na(+) and Ca(2+) ions that leads to membrane depolarization and neurotransmitter release from synaptic terminals. Upon photon absorption cGMP levels decline leading to channel closure and membrane hyperpolarization that ultimately slows neurotransmitter release and signals the presence of light, the end point of the phototransduction cascade. Pore-forming subunit of the gustatory cyclic nucleotide-gated channel. In the taste buds, may sense oral extracellular pH and conduct ion currents that modulate the excitability of taste cells. Conducts cGMP- and cAMP-gated ion currents, with permeability for monovalent and divalent cations. This chain is Cyclic nucleotide-gated channel alpha-3, found in Bos taurus (Bovine).